Reading from the N-terminus, the 365-residue chain is 4-hydroxy-3-methylbut-2-en-1-yl diphosphate synthase (flavodoxin) (365 aa).

4 residues coordinate [4Fe-4S] cluster: C270, C273, C305, and E312.

Belongs to the IspG family. It depends on [4Fe-4S] cluster as a cofactor.

It carries out the reaction (2E)-4-hydroxy-3-methylbut-2-enyl diphosphate + 2 oxidized [2Fe-2S]-[ferredoxin] + H2O = 2-C-methyl-D-erythritol 2,4-cyclic diphosphate + 2 reduced [2Fe-2S]-[ferredoxin] + H(+). The enzyme catalyses (2E)-4-hydroxy-3-methylbut-2-enyl diphosphate + oxidized [flavodoxin] + H2O + 2 H(+) = 2-C-methyl-D-erythritol 2,4-cyclic diphosphate + reduced [flavodoxin]. The protein operates within isoprenoid biosynthesis; isopentenyl diphosphate biosynthesis via DXP pathway; isopentenyl diphosphate from 1-deoxy-D-xylulose 5-phosphate: step 5/6. Converts 2C-methyl-D-erythritol 2,4-cyclodiphosphate (ME-2,4cPP) into 1-hydroxy-2-methyl-2-(E)-butenyl 4-diphosphate. Involved in density-dependent regulation of 2'-N-acetyltransferase. In Providencia stuartii, this protein is 4-hydroxy-3-methylbut-2-en-1-yl diphosphate synthase (flavodoxin).